The sequence spans 1635 residues: U3 small nucleolar RNA-associated protein 10 (1635 aa).

A disordered region spans residues 781–803 (TTSMDAPSDESTKRRRRSSSSTV). Transmembrane regions (helical) follow at residues 1141-1161 (PELLNVILSLLPLPLFVTVAG) and 1288-1308 (IALSVLALFATFIKRLPSFMV).

This sequence belongs to the HEATR1/UTP10 family. As to quaternary structure, component of the ribosomal small subunit (SSU) processome.

The protein localises to the nucleus. Its subcellular location is the nucleolus. It is found in the membrane. Its function is as follows. Involved in nucleolar processing of pre-18S ribosomal RNA. Involved in ribosome biosynthesis. The polypeptide is U3 small nucleolar RNA-associated protein 10 (Yarrowia lipolytica (strain CLIB 122 / E 150) (Yeast)).